The sequence spans 259 residues: Small ribosomal subunit protein uS2 (259 aa).

Belongs to the universal ribosomal protein uS2 family.

The polypeptide is Small ribosomal subunit protein uS2 (Dinoroseobacter shibae (strain DSM 16493 / NCIMB 14021 / DFL 12)).